We begin with the raw amino-acid sequence, 570 residues long: Nucleoprotein (570 aa).

The segment at 54–241 is binding site for the cap structure m7GTP; it reads MRKQKRDDGD…IDTKKSSLNI (188 aa). Asp390 and Glu392 together coordinate Mn(2+). Zn(2+) contacts are provided by Glu400, Cys507, His510, and Cys530. Asp534 provides a ligand contact to Mn(2+).

Belongs to the arenaviridae nucleocapsid protein family. Homomultimerizes to form the nucleocapsid. Binds to viral genomic RNA. Interacts with glycoprotein G2. Interacts with protein Z; this interaction probably directs the encapsidated genome to budding sites. Interacts with protein L; this interaction does not interfere with Z-L interaction. Interacts with host IKBKE (via Protein kinase domain); the interaction inhibits IKBKE kinase activity.

It is found in the virion. It localises to the host cytoplasm. Its function is as follows. Encapsidates the genome, protecting it from nucleases. The encapsidated genomic RNA is termed the nucleocapsid (NC). Serves as template for viral transcription and replication. The increased presence of protein N in host cell does not seem to trigger the switch from transcription to replication as observed in other negative strain RNA viruses. Through the interaction with host IKBKE, strongly inhibits the phosphorylation and nuclear translocation of host IRF3, a protein involved in interferon activation pathway, leading to the inhibition of interferon-beta and IRF3-dependent promoters activation. Also encodes a functional 3'-5' exoribonuclease that degrades preferentially dsRNA substrates and thereby participates in the suppression of interferon induction. In Homo sapiens (Human), this protein is Nucleoprotein.